The primary structure comprises 197 residues: 7-methyl-GTP pyrophosphatase (197 aa).

Catalysis depends on Asp69, which acts as the Proton acceptor.

This sequence belongs to the Maf family. YceF subfamily. A divalent metal cation is required as a cofactor.

It is found in the cytoplasm. The enzyme catalyses N(7)-methyl-GTP + H2O = N(7)-methyl-GMP + diphosphate + H(+). Functionally, nucleoside triphosphate pyrophosphatase that hydrolyzes 7-methyl-GTP (m(7)GTP). May have a dual role in cell division arrest and in preventing the incorporation of modified nucleotides into cellular nucleic acids. In Pectobacterium atrosepticum (strain SCRI 1043 / ATCC BAA-672) (Erwinia carotovora subsp. atroseptica), this protein is 7-methyl-GTP pyrophosphatase.